Consider the following 94-residue polypeptide: Co-chaperonin GroES (94 aa).

This sequence belongs to the GroES chaperonin family. As to quaternary structure, heptamer of 7 subunits arranged in a ring. Interacts with the chaperonin GroEL.

The protein resides in the cytoplasm. Its function is as follows. Together with the chaperonin GroEL, plays an essential role in assisting protein folding. The GroEL-GroES system forms a nano-cage that allows encapsulation of the non-native substrate proteins and provides a physical environment optimized to promote and accelerate protein folding. GroES binds to the apical surface of the GroEL ring, thereby capping the opening of the GroEL channel. The sequence is that of Co-chaperonin GroES from Halalkalibacterium halodurans (strain ATCC BAA-125 / DSM 18197 / FERM 7344 / JCM 9153 / C-125) (Bacillus halodurans).